The chain runs to 293 residues: Elongation factor Ts (293 aa).

The tract at residues 80–83 (TDFV) is involved in Mg(2+) ion dislocation from EF-Tu.

This sequence belongs to the EF-Ts family.

Its subcellular location is the cytoplasm. Its function is as follows. Associates with the EF-Tu.GDP complex and induces the exchange of GDP to GTP. It remains bound to the aminoacyl-tRNA.EF-Tu.GTP complex up to the GTP hydrolysis stage on the ribosome. The sequence is that of Elongation factor Ts from Burkholderia cenocepacia (strain HI2424).